The following is a 367-amino-acid chain: 3-dehydroquinate synthase (367 aa).

NAD(+)-binding positions include Asp-69 to Lys-74, Gly-103 to Asp-107, Thr-127 to Thr-128, Lys-140, and Lys-149. 3 residues coordinate Zn(2+): Glu-182, His-245, and His-262.

The protein belongs to the sugar phosphate cyclases superfamily. Dehydroquinate synthase family. The cofactor is Co(2+). Requires Zn(2+) as cofactor. NAD(+) serves as cofactor.

Its subcellular location is the cytoplasm. It catalyses the reaction 7-phospho-2-dehydro-3-deoxy-D-arabino-heptonate = 3-dehydroquinate + phosphate. It participates in metabolic intermediate biosynthesis; chorismate biosynthesis; chorismate from D-erythrose 4-phosphate and phosphoenolpyruvate: step 2/7. In terms of biological role, catalyzes the conversion of 3-deoxy-D-arabino-heptulosonate 7-phosphate (DAHP) to dehydroquinate (DHQ). The sequence is that of 3-dehydroquinate synthase from Ectopseudomonas mendocina (strain ymp) (Pseudomonas mendocina).